Here is a 92-residue protein sequence, read N- to C-terminus: Large ribosomal subunit protein uL24c (92 aa).

Belongs to the universal ribosomal protein uL24 family. In terms of assembly, part of the 50S ribosomal subunit.

It is found in the plastid. It localises to the chloroplast. Functionally, one of two assembly initiator proteins, it binds directly to the 5'-end of the 23S rRNA, where it nucleates assembly of the 50S subunit. The protein is Large ribosomal subunit protein uL24c (rpl24) of Gracilaria tenuistipitata var. liui (Red alga).